The sequence spans 264 residues: Thymidylate synthase (264 aa).

A dUMP-binding site is contributed by Arg-21. Position 51 (His-51) interacts with (6R)-5,10-methylene-5,6,7,8-tetrahydrofolate. 126–127 contributes to the dUMP binding site; that stretch reads RR. The active-site Nucleophile is the Cys-146. DUMP-binding positions include 166 to 169, Asn-177, and 207 to 209; these read RSAD and HLY. Asp-169 serves as a coordination point for (6R)-5,10-methylene-5,6,7,8-tetrahydrofolate. Ala-263 is a binding site for (6R)-5,10-methylene-5,6,7,8-tetrahydrofolate.

Belongs to the thymidylate synthase family. Bacterial-type ThyA subfamily. Homodimer.

It localises to the cytoplasm. The enzyme catalyses dUMP + (6R)-5,10-methylene-5,6,7,8-tetrahydrofolate = 7,8-dihydrofolate + dTMP. It participates in pyrimidine metabolism; dTTP biosynthesis. In terms of biological role, catalyzes the reductive methylation of 2'-deoxyuridine-5'-monophosphate (dUMP) to 2'-deoxythymidine-5'-monophosphate (dTMP) while utilizing 5,10-methylenetetrahydrofolate (mTHF) as the methyl donor and reductant in the reaction, yielding dihydrofolate (DHF) as a by-product. This enzymatic reaction provides an intracellular de novo source of dTMP, an essential precursor for DNA biosynthesis. In Thiobacillus denitrificans (strain ATCC 25259 / T1), this protein is Thymidylate synthase.